The sequence spans 216 residues: Uracil phosphoribosyltransferase (216 aa).

5-phospho-alpha-D-ribose 1-diphosphate contacts are provided by residues Arg-85, Arg-110, and 135–143 (DPMVATGYS). Residues Ile-200 and 205–207 (GDA) contribute to the uracil site. Asp-206 provides a ligand contact to 5-phospho-alpha-D-ribose 1-diphosphate.

It belongs to the UPRTase family. Mg(2+) is required as a cofactor.

The catalysed reaction is UMP + diphosphate = 5-phospho-alpha-D-ribose 1-diphosphate + uracil. Its pathway is pyrimidine metabolism; UMP biosynthesis via salvage pathway; UMP from uracil: step 1/1. Allosterically activated by GTP. In terms of biological role, catalyzes the conversion of uracil and 5-phospho-alpha-D-ribose 1-diphosphate (PRPP) to UMP and diphosphate. The chain is Uracil phosphoribosyltransferase from Paraburkholderia phytofirmans (strain DSM 17436 / LMG 22146 / PsJN) (Burkholderia phytofirmans).